A 140-amino-acid chain; its full sequence is MAIERTFSMIKPDATKRNLTGAITKIFEDNGLRVIASKRVWMSKREAEGFYAVHKERPFFGELVDGMTSGPTVVQVLEGEGAILKNREIMGATNPANAAEGTIRKIHALSIGENSVHGSDAPETAAVEIAYWFSETEIVG.

Positions 11, 59, 87, 93, 104, and 114 each coordinate ATP. The Pros-phosphohistidine intermediate role is filled by histidine 117.

Belongs to the NDK family. Homotetramer. The cofactor is Mg(2+).

The protein localises to the cytoplasm. It catalyses the reaction a 2'-deoxyribonucleoside 5'-diphosphate + ATP = a 2'-deoxyribonucleoside 5'-triphosphate + ADP. The catalysed reaction is a ribonucleoside 5'-diphosphate + ATP = a ribonucleoside 5'-triphosphate + ADP. Major role in the synthesis of nucleoside triphosphates other than ATP. The ATP gamma phosphate is transferred to the NDP beta phosphate via a ping-pong mechanism, using a phosphorylated active-site intermediate. This chain is Nucleoside diphosphate kinase, found in Rhizobium rhizogenes (strain K84 / ATCC BAA-868) (Agrobacterium radiobacter).